A 451-amino-acid polypeptide reads, in one-letter code: Chromosomal replication initiator protein DnaA (451 aa).

The interval 1–77 is domain I, interacts with DnaA modulators; that stretch reads MTENEQIFWN…EVYNAQISVD (77 aa). A domain II region spans residues 77–110; sequence DYVFEEDLMIEQNQTKINQKPKQQALNSLPTVTS. Residues 111–329 form a domain III, AAA+ region region; the sequence is DLNPKYSFEN…GALKDISLVA (219 aa). 4 residues coordinate ATP: Gly155, Gly157, Lys158, and Thr159. Residues 330 to 451 are domain IV, binds dsDNA; it reads NFKQIDTITV…EIETIKNKIK (122 aa).

It belongs to the DnaA family. In terms of assembly, oligomerizes as a right-handed, spiral filament on DNA at oriC.

It is found in the cytoplasm. Plays an essential role in the initiation and regulation of chromosomal replication. ATP-DnaA binds to the origin of replication (oriC) to initiate formation of the DNA replication initiation complex once per cell cycle. Binds the DnaA box (a 9 base pair repeat at the origin) and separates the double-stranded (ds)DNA. Forms a right-handed helical filament on oriC DNA; dsDNA binds to the exterior of the filament while single-stranded (ss)DNA is stabiized in the filament's interior. The ATP-DnaA-oriC complex binds and stabilizes one strand of the AT-rich DNA unwinding element (DUE), permitting loading of DNA polymerase. After initiation quickly degrades to an ADP-DnaA complex that is not apt for DNA replication. Binds acidic phospholipids. The chain is Chromosomal replication initiator protein DnaA from Streptococcus pyogenes serotype M4 (strain MGAS10750).